The primary structure comprises 372 residues: Phospho-N-acetylmuramoyl-pentapeptide-transferase (372 aa).

10 helical membrane-spanning segments follow: residues 25–45 (RSLL…PIMI), 73–93 (TMGG…WADL), 98–118 (VWIV…DDWI), 134–154 (FFWT…IATQ), 176–196 (SIPL…YLVI), 211–231 (GLAI…AYLS), 251–271 (LVVI…YNAH), 275–295 (VFMG…IAVM), 300–320 (IVFA…FLQI), and 349–369 (QVVI…LMTL).

It belongs to the glycosyltransferase 4 family. MraY subfamily. The cofactor is Mg(2+).

The protein resides in the cell inner membrane. It catalyses the reaction UDP-N-acetyl-alpha-D-muramoyl-L-alanyl-gamma-D-glutamyl-meso-2,6-diaminopimeloyl-D-alanyl-D-alanine + di-trans,octa-cis-undecaprenyl phosphate = di-trans,octa-cis-undecaprenyl diphospho-N-acetyl-alpha-D-muramoyl-L-alanyl-D-glutamyl-meso-2,6-diaminopimeloyl-D-alanyl-D-alanine + UMP. It participates in cell wall biogenesis; peptidoglycan biosynthesis. Its function is as follows. Catalyzes the initial step of the lipid cycle reactions in the biosynthesis of the cell wall peptidoglycan: transfers peptidoglycan precursor phospho-MurNAc-pentapeptide from UDP-MurNAc-pentapeptide onto the lipid carrier undecaprenyl phosphate, yielding undecaprenyl-pyrophosphoryl-MurNAc-pentapeptide, known as lipid I. This Acinetobacter baumannii (strain AB0057) protein is Phospho-N-acetylmuramoyl-pentapeptide-transferase.